Here is a 319-residue protein sequence, read N- to C-terminus: MESFNVVETLQPAERALFWVGALITASLALYVVYKTITGFRIWVLGNGDLLSPKLGKWAVVTGATDGIGKSYAEELARRGFSMMLISRSQEKLDDVAKSLESTYKVETKTIAVDFSQIDVYPKIEKGLAGLEIGILVNNVGISYSYPEFFLHIPDLENFITTMINVNITSVCQMTRLVLPRMEARAKGVILNISSASGMFPVPLLTIYSSTKAFVDFFSRGLQTEYKCKGIIIQSVLPFFVATKMTKIRKPTLDKPTPERYVAAELNTVGLQDQTNGYFPHAVMGWVTTILAPIDLVLNLGLRMNKAQRGGYLRRRKLR.

A helical transmembrane segment spans residues 17–37 (LFWVGALITASLALYVVYKTI). An NADP(+)-binding site is contributed by 56–85 (GKWAVVTGATDGIGKSYAEELARRGFSMML). The next 2 helical transmembrane spans lie at 188 to 208 (GVILNISSASGMFPVPLLTIY) and 282 to 302 (AVMGWVTTILAPIDLVLNLGL). Serine 195 provides a ligand contact to substrate. The active-site Proton acceptor is the tyrosine 208.

This sequence belongs to the short-chain dehydrogenases/reductases (SDR) family. 17-beta-HSD 3 subfamily.

The protein resides in the endoplasmic reticulum membrane. It carries out the reaction a very-long-chain (3R)-3-hydroxyacyl-CoA + NADP(+) = a very-long-chain 3-oxoacyl-CoA + NADPH + H(+). The enzyme catalyses 17beta-estradiol + NAD(+) = estrone + NADH + H(+). It catalyses the reaction 17beta-estradiol + NADP(+) = estrone + NADPH + H(+). Its pathway is lipid metabolism; fatty acid biosynthesis. It functions in the pathway steroid biosynthesis; estrogen biosynthesis. Functionally, catalyzes the second of the four reactions of the long-chain fatty acids elongation cycle. This endoplasmic reticulum-bound enzymatic process, allows the addition of two carbons to the chain of long- and very long-chain fatty acids/VLCFAs per cycle. This enzyme has a 3-ketoacyl-CoA reductase activity, reducing 3-ketoacyl-CoA to 3-hydroxyacyl-CoA, within each cycle of fatty acid elongation. Thereby, it may participate in the production of VLCFAs of different chain lengths that are involved in multiple biological processes as precursors of membrane lipids and lipid mediators. May also catalyze the transformation of estrone (E1) into estradiol (E2) and play a role in estrogen formation. The polypeptide is Very-long-chain 3-oxoacyl-CoA reductase-A (hsd17b12a) (Danio rerio (Zebrafish)).